A 474-amino-acid chain; its full sequence is MKRILVFLLAVAFVHALERGRDYEKDKVCKDLASLGREDFTSLSMVLYSRKFPSGTFEQISHLVNEVVSLTVTCCAEGADPDCYDNRTSALSDKSCESNSPFPVHPGTPECCTHEGLEKKLCMAALKHQPQEFPTYVEPTNDEICEAFRKDPKDFADRFMYEYSINYGQAPLTLLVGYTKSYLSMVGSCCTSPNPTVCFLKERLQLKHFSLLTIMTNRICSQYAAYGKEKSRLSHLIKFAQKVPTAHLEDVLPLAEDITTILSKCCDSVSEDCIKELPEYAVKLCDNLSTKNSKFKDCCQEKTPMEIFVCAYFMPASPNPELPDVKLPMNKDVCDEGNTKVLDQYIFELSRKTQIPEVFLTKILESTLKSLDECCHSESSTACLNAKGPQLTRELSSFIQKGQELCADYSENTFTEYKKKLAERLRGKFPDATETDLQELVAKRSDFASKCCSVNSPPLYCNSEIDAEINTLQS.

An N-terminal signal peptide occupies residues 1-16 (MKRILVFLLAVAFVHA). Albumin domains follow at residues 17–208 (LERG…QLKH), 209–393 (FSLL…QLTR), and 394–474 (ELSS…TLQS). 2 cysteine pairs are disulfide-bonded: C29–C75 and C74–C83. Residue N86 is glycosylated (N-linked (GlcNAc...) asparagine). 12 disulfide bridges follow: C96–C112, C111–C122, C145–C190, C189–C198, C220–C266, C265–C273, C285–C299, C298–C310, C334–C375, C374–C383, C406–C452, and C451–C461. N-linked (GlcNAc...) asparagine glycosylation is present at N287.

Belongs to the ALB/AFP/VDB family. Associates with membrane-bound immunoglobulin on the surface of B-lymphocytes and with IgG Fc receptor on the membranes of T-lymphocytes. Interacts with LRP2; the interaction is required for renal uptake of GC in complex with 25-hydroxyvitamin D3.

The protein localises to the secreted. Involved in vitamin D transport and storage, scavenging of extracellular G-actin, enhancement of the chemotactic activity of C5 alpha for neutrophils in inflammation and macrophage activation. The chain is Vitamin D-binding protein (GC) from Bos taurus (Bovine).